The sequence spans 483 residues: Glutamyl-tRNA(Gln) amidotransferase subunit A (483 aa).

Active-site charge relay system residues include K76 and S151. The Acyl-ester intermediate role is filled by S175.

This sequence belongs to the amidase family. GatA subfamily. Heterotrimer of A, B and C subunits.

The catalysed reaction is L-glutamyl-tRNA(Gln) + L-glutamine + ATP + H2O = L-glutaminyl-tRNA(Gln) + L-glutamate + ADP + phosphate + H(+). Allows the formation of correctly charged Gln-tRNA(Gln) through the transamidation of misacylated Glu-tRNA(Gln) in organisms which lack glutaminyl-tRNA synthetase. The reaction takes place in the presence of glutamine and ATP through an activated gamma-phospho-Glu-tRNA(Gln). The polypeptide is Glutamyl-tRNA(Gln) amidotransferase subunit A (Nitrosospira multiformis (strain ATCC 25196 / NCIMB 11849 / C 71)).